Here is a 415-residue protein sequence, read N- to C-terminus: SVF1-like protein YDR222W (415 aa).

Belongs to the SVF1 family.

The protein localises to the cytoplasm. The protein is SVF1-like protein YDR222W of Saccharomyces cerevisiae (strain ATCC 204508 / S288c) (Baker's yeast).